The sequence spans 135 residues: NAD(P)H-quinone oxidoreductase subunit 3 (135 aa).

The next 3 helical transmembrane spans lie at 15-35, 79-99, and 104-124; these read LMFV…AAAV, MFAL…PWAV, and LGLL…VALA.

This sequence belongs to the complex I subunit 3 family. In terms of assembly, NDH-1 can be composed of about 15 different subunits; different subcomplexes with different compositions have been identified which probably have different functions.

It is found in the cellular thylakoid membrane. The enzyme catalyses a plastoquinone + NADH + (n+1) H(+)(in) = a plastoquinol + NAD(+) + n H(+)(out). It carries out the reaction a plastoquinone + NADPH + (n+1) H(+)(in) = a plastoquinol + NADP(+) + n H(+)(out). In terms of biological role, NDH-1 shuttles electrons from an unknown electron donor, via FMN and iron-sulfur (Fe-S) centers, to quinones in the respiratory and/or the photosynthetic chain. The immediate electron acceptor for the enzyme in this species is believed to be plastoquinone. Couples the redox reaction to proton translocation, and thus conserves the redox energy in a proton gradient. Cyanobacterial NDH-1 also plays a role in inorganic carbon-concentration. In Synechococcus sp. (strain CC9311), this protein is NAD(P)H-quinone oxidoreductase subunit 3.